The primary structure comprises 412 residues: Serine hydroxymethyltransferase (412 aa).

(6S)-5,6,7,8-tetrahydrofolate contacts are provided by residues Leu117 and 121–123 (GHL). The residue at position 226 (Lys226) is an N6-(pyridoxal phosphate)lysine. Residue Glu241 coordinates (6S)-5,6,7,8-tetrahydrofolate.

It belongs to the SHMT family. Homodimer. Pyridoxal 5'-phosphate is required as a cofactor.

It localises to the cytoplasm. The catalysed reaction is (6R)-5,10-methylene-5,6,7,8-tetrahydrofolate + glycine + H2O = (6S)-5,6,7,8-tetrahydrofolate + L-serine. The protein operates within one-carbon metabolism; tetrahydrofolate interconversion. It functions in the pathway amino-acid biosynthesis; glycine biosynthesis; glycine from L-serine: step 1/1. Its function is as follows. Catalyzes the reversible interconversion of serine and glycine with tetrahydrofolate (THF) serving as the one-carbon carrier. This reaction serves as the major source of one-carbon groups required for the biosynthesis of purines, thymidylate, methionine, and other important biomolecules. Also exhibits THF-independent aldolase activity toward beta-hydroxyamino acids, producing glycine and aldehydes, via a retro-aldol mechanism. This chain is Serine hydroxymethyltransferase, found in Staphylococcus carnosus (strain TM300).